The primary structure comprises 468 residues: 6-phospho-beta-galactosidase (468 aa).

Gln-19, His-116, Asn-159, Glu-160, and Asn-297 together coordinate D-galactose 6-phosphate. Glu-160 functions as the Proton donor in the catalytic mechanism. Glu-375 functions as the Nucleophile in the catalytic mechanism. D-galactose 6-phosphate-binding residues include Ser-428, Trp-429, Lys-435, and Tyr-437.

Belongs to the glycosyl hydrolase 1 family.

The catalysed reaction is a 6-phospho-beta-D-galactoside + H2O = D-galactose 6-phosphate + an alcohol. It participates in carbohydrate metabolism; lactose degradation; D-galactose 6-phosphate and beta-D-glucose from lactose 6-phosphate: step 1/1. This chain is 6-phospho-beta-galactosidase, found in Streptococcus uberis (strain ATCC BAA-854 / 0140J).